A 397-amino-acid polypeptide reads, in one-letter code: Elongation factor Tu (397 aa).

In terms of domain architecture, tr-type G spans Lys-10 to Val-207. The segment at Gly-19–Thr-26 is G1. Gly-19–Thr-26 is a binding site for GTP. Thr-26 is a binding site for Mg(2+). Residues Gly-60–Ala-64 form a G2 region. Residues Asp-81–Gly-84 form a G3 region. GTP is bound by residues Asp-81–His-85 and Asn-136–Asp-139. Residues Asn-136–Asp-139 form a G4 region. A G5 region spans residues Ser-174–Leu-176.

This sequence belongs to the TRAFAC class translation factor GTPase superfamily. Classic translation factor GTPase family. EF-Tu/EF-1A subfamily. As to quaternary structure, monomer.

It localises to the cytoplasm. It carries out the reaction GTP + H2O = GDP + phosphate + H(+). GTP hydrolase that promotes the GTP-dependent binding of aminoacyl-tRNA to the A-site of ribosomes during protein biosynthesis. In Syntrophobacter fumaroxidans (strain DSM 10017 / MPOB), this protein is Elongation factor Tu.